Here is a 312-residue protein sequence, read N- to C-terminus: Putative HTH-type transcriptional regulatory protein Ta1363 (312 aa).

In terms of domain architecture, HTH cro/C1-type spans 133–186; sequence LREMRMKMSLSIGYLSHYLGVSRRSVSLYENGSSATIDVFLKLQEIIKSDLVDH. Residues 144–163 constitute a DNA-binding region (H-T-H motif); sequence IGYLSHYLGVSRRSVSLYEN.

This chain is Putative HTH-type transcriptional regulatory protein Ta1363, found in Thermoplasma acidophilum (strain ATCC 25905 / DSM 1728 / JCM 9062 / NBRC 15155 / AMRC-C165).